A 106-amino-acid chain; its full sequence is Replication restart protein PriB (106 aa).

Residues 4–103 (MNRLVLSGTV…LHAEQIELID (100 aa)) form the SSB domain.

Belongs to the PriB family. As to quaternary structure, homodimer. Interacts with PriA and DnaT. Component of the replication restart primosome. Primosome assembly occurs via a 'hand-off' mechanism. PriA binds to replication forks, subsequently PriB then DnaT bind; DnaT then displaces ssDNA to generate the helicase loading substrate.

Involved in the restart of stalled replication forks, which reloads the replicative helicase on sites other than the origin of replication; the PriA-PriB pathway is the major replication restart pathway. During primosome assembly it facilitates complex formation between PriA and DnaT on DNA; stabilizes PriA on DNA. Stimulates the DNA unwinding activity of PriA helicase. This is Replication restart protein PriB from Pectobacterium atrosepticum (strain SCRI 1043 / ATCC BAA-672) (Erwinia carotovora subsp. atroseptica).